The sequence spans 762 residues: Phospholipase D alpha 4 (762 aa).

The region spanning 1–116 is the C2 domain; it reads MELEEQKKYF…VINGFFPLIA (116 aa). A Ca(2+)-binding site is contributed by Asp-172. One can recognise a PLD phosphodiesterase 1 domain in the interval 301-339; sequence TAFAHHQKTITLDTRVTNSSTKEREIMSFLGGFDLCDGR. Residues His-306, Lys-308, and Asp-313 contribute to the active site. His-306 contributes to the a 1,2-diacyl-sn-glycero-3-phosphate binding site. The Ca(2+) site is built by His-345 and His-377. 2 residues coordinate a 1,2-diacyl-sn-glycero-3-phosphate: Gln-477 and His-615. The PLD phosphodiesterase 2 domain occupies 610–637; the sequence is FMVYVHSKLMIVDDTYILIGSANINQRS. Catalysis depends on residues His-615, Lys-617, and Asp-622. Position 671 (Glu-671) interacts with Ca(2+).

Belongs to the phospholipase D family. C2-PLD subfamily. Ca(2+) serves as cofactor. In terms of tissue distribution, expressed in roots, leaves, stems, siliques,flowers and inflorescences.

The protein localises to the cell membrane. It carries out the reaction a 1,2-diacyl-sn-glycero-3-phosphocholine + H2O = a 1,2-diacyl-sn-glycero-3-phosphate + choline + H(+). Its function is as follows. Hydrolyzes glycerol-phospholipids at the terminal phosphodiesteric bond to generate phosphatidic acids (PA). Promotes growth and plays a role in nitrogen signaling. The polypeptide is Phospholipase D alpha 4 (Arabidopsis thaliana (Mouse-ear cress)).